The sequence spans 51 residues: uncharacterized protein (51 aa).

This is an uncharacterized protein from Borreliella burgdorferi (strain ATCC 35210 / DSM 4680 / CIP 102532 / B31) (Borrelia burgdorferi).